The chain runs to 256 residues: MQIKIGEIESKLNNIIEEEGAAYFVLIDPDEKNYREIANHVKDYADAIIIGGSIGIINLDEVTKEIKEITGLPVILFPGNVDGVTKEADAVLFMSLMNSKNTYWNMTAPTLGALTIKKYGLETLPMAYLGIEPISKTAVGFVGEVNEIPQKKPEIAGIYSLSASYFGMRWVYLEAGSGAEYPVNNEMIGVSKKLSGINIIVGGGIRTPEVAYEKVMSGADVIVTGTLTEKDPKAVEEMKKAIKKAGMDKLKMLSKK.

Positions 28 and 53 each coordinate Mg(2+). Residues 172-178 (YLEAGSG), 203-204 (GG), and 225-226 (GT) contribute to the sn-glycerol 1-phosphate site.

It belongs to the GGGP/HepGP synthase family. Group II subfamily. Requires Mg(2+) as cofactor.

Its subcellular location is the cytoplasm. The enzyme catalyses sn-glycerol 1-phosphate + (2E,6E,10E)-geranylgeranyl diphosphate = sn-3-O-(geranylgeranyl)glycerol 1-phosphate + diphosphate. It functions in the pathway membrane lipid metabolism; glycerophospholipid metabolism. Prenyltransferase that catalyzes the transfer of the geranylgeranyl moiety of geranylgeranyl diphosphate (GGPP) to the C3 hydroxyl of sn-glycerol-1-phosphate (G1P). This reaction is the first ether-bond-formation step in the biosynthesis of archaeal membrane lipids. The chain is Geranylgeranylglyceryl phosphate synthase from Methanococcus maripaludis (strain C5 / ATCC BAA-1333).